The following is a 185-amino-acid chain: Ribosome-recycling factor (185 aa).

It belongs to the RRF family.

It localises to the cytoplasm. Its function is as follows. Responsible for the release of ribosomes from messenger RNA at the termination of protein biosynthesis. May increase the efficiency of translation by recycling ribosomes from one round of translation to another. This Pseudothermotoga lettingae (strain ATCC BAA-301 / DSM 14385 / NBRC 107922 / TMO) (Thermotoga lettingae) protein is Ribosome-recycling factor.